The sequence spans 472 residues: Adenosylhomocysteinase (472 aa).

3 residues coordinate substrate: Thr-61, Asp-136, and Glu-196. 197–199 contacts NAD(+); that stretch reads TTT. Positions 226 and 230 each coordinate substrate. Residues Asn-231, 260-265, Glu-283, Asn-318, 339-341, and Asn-384 each bind NAD(+); these read GYGDVG and IGH.

It belongs to the adenosylhomocysteinase family. NAD(+) is required as a cofactor.

Its subcellular location is the cytoplasm. The enzyme catalyses S-adenosyl-L-homocysteine + H2O = L-homocysteine + adenosine. Its pathway is amino-acid biosynthesis; L-homocysteine biosynthesis; L-homocysteine from S-adenosyl-L-homocysteine: step 1/1. In terms of biological role, may play a key role in the regulation of the intracellular concentration of adenosylhomocysteine. This chain is Adenosylhomocysteinase, found in Cupriavidus metallidurans (strain ATCC 43123 / DSM 2839 / NBRC 102507 / CH34) (Ralstonia metallidurans).